A 205-amino-acid chain; its full sequence is Ypt/Rab-type GTPase Rab7 (205 aa).

Residues 17–23, 33–40, Gly66, 125–128, and 157–159 each bind GTP; these read SGVGKTS, FSASYKAT, NKID, and SAK. An Effector region motif is present at residues 37 to 45; it reads YKATIGADF. Residues Cys203 and Cys205 are each lipidated (S-geranylgeranyl cysteine). The residue at position 205 (Cys205) is a Cysteine methyl ester.

This sequence belongs to the small GTPase superfamily. Rab family.

It localises to the cell membrane. Alternates between an inactive form bound to GDP and an active form bound to GTP. Activated by guanine nucleotide-exchange factors (GEFs), and inactivated by GTPase-activating proteins (GAPs). In terms of biological role, ypt/Rab-type GTPases are key regulators of membrane trafficking and intracellular vesicular transport. They act as molecular switches that convert between GTP-bound and GDP-bound states, and regulate virtually all steps of membrane traffic from the formation of the transport vesicle at the donor membrane to its fusion at the target membrane. In the GDP-bound state, Ypt proteins are predominantly cytosolic, solubilized through the interaction with a GDP dissociation inhibitor (GDI). In the GTP-bound state, the proteins are membrane bound and interact with specific effector proteins that select cargo, promote vesicle movement, or verify the correct site of fusion. This Neurospora crassa (strain ATCC 24698 / 74-OR23-1A / CBS 708.71 / DSM 1257 / FGSC 987) protein is Ypt/Rab-type GTPase Rab7 (gtp-14).